The following is a 167-amino-acid chain: Cytochrome c-type biogenesis protein CcmE (167 aa).

At 1 to 7 (MTRKQRR) the chain is on the cytoplasmic side. The chain crosses the membrane as a helical; Signal-anchor for type II membrane protein span at residues 8 to 28 (LLMIGGAGVVLIVAVGLVLNA). The Periplasmic segment spans residues 29 to 167 (LRDSIVFFST…TSANAAEGGK (139 aa)). Positions 122 and 126 each coordinate heme. Basic and acidic residues predominate over residues 137 to 150 (KDGHWKDDYGKKSP). Positions 137–167 (KDGHWKDDYGKKSPGETTAGQTSANAAEGGK) are disordered. Positions 151–161 (GETTAGQTSAN) are enriched in polar residues.

Belongs to the CcmE/CycJ family.

The protein localises to the cell inner membrane. Heme chaperone required for the biogenesis of c-type cytochromes. Transiently binds heme delivered by CcmC and transfers the heme to apo-cytochromes in a process facilitated by CcmF and CcmH. This Rhodopseudomonas palustris (strain ATCC BAA-98 / CGA009) protein is Cytochrome c-type biogenesis protein CcmE.